The primary structure comprises 168 residues: Vitelline membrane protein Vm26Ab (168 aa).

The signal sequence occupies residues 1-23; it reads MAFNFGHLLIAGLVALSAVSSET. Positions 24–42 are cleaved as a propeptide — removed between stage 11 and 14 of oogenesis; the sequence is IQLQPTQGILIPAPLAENI. An essential for N-terminal propeptide removal. Potential serine protease cleavage site region spans residues 43 to 46; that stretch reads RVSR. Residues 52 to 119 form an 8 X 8 AA approximate repeats of P-[AS]-Y-S-A-P-A-[AS] region; it reads YGAAPAAPSY…PAYSAPASIP (68 aa). Residues 55–58 form a 1; half-length repeat; that stretch reads APAA. Copy 2 of the repeat occupies 59–66; it reads PSYSAPAA. The stretch at 70-77 is one 3; approximate repeat; it reads QAYSAPAA. Repeat copies occupy residues 78–85, 86–93, 94–101, 102–109, and 110–117. A VM domain is found at 117-154; sequence SIPSPPCPKNYLFSCQPSLQPVPCSAPAQSYGSAGAYS. The propeptide at 155–168 is removed between stage 9 and 12 of oogenesis; that stretch reads QYVPQYAVPFVREL.

It belongs to the vitelline membrane protein family. Interacts with vml and Vm26Aa; forms part of a disulfide-linked network within the vitelline membrane of stage 10 egg chambers. In terms of processing, proteolytically processed after secretion into the perivitelline space. Undergoes several proteolytic processing steps during formation of the vitelline membrane; an initial processing step removing a C-terminal propeptide occurs between stage 9 and 12 of oogenesis while a second removing a N-terminal propeptide occurs between stage 11 and 14. Post-translationally, becomes part of a disulfide-linked network including other vitelline membrane proteins, including vml and Vm26Aa, during vitelline membrane biogenesis and maturation. Cys-123, Cys-131 and Cys-140 are involved in disulfide network formation, with Cys-131 being the most important. Undergoes both disulfide and non-disulfide cross-linking upon incorporation into the vitelline membrane. In terms of tissue distribution, follicle cells.

It is found in the secreted. It localises to the extracellular space. The protein localises to the extracellular matrix. Major early eggshell protein secreted by follicle cells into the perivitelline space and incorporated into the vitelline membrane. Involved in vitelline membrane biogenesis; forms a cross-linked network with other vitelline membrane components. The protein is Vitelline membrane protein Vm26Ab of Drosophila melanogaster (Fruit fly).